Here is a 916-residue protein sequence, read N- to C-terminus: Protein translocase subunit SecA (916 aa).

ATP contacts are provided by residues glutamine 87, 105-109 (GEGKT), and aspartate 507. Zn(2+)-binding residues include cysteine 900, cysteine 902, cysteine 911, and histidine 912.

It belongs to the SecA family. Monomer and homodimer. Part of the essential Sec protein translocation apparatus which comprises SecA, SecYEG and auxiliary proteins SecDF-YajC and YidC. Requires Zn(2+) as cofactor.

It is found in the cell inner membrane. Its subcellular location is the cytoplasm. The catalysed reaction is ATP + H2O + cellular proteinSide 1 = ADP + phosphate + cellular proteinSide 2.. Part of the Sec protein translocase complex. Interacts with the SecYEG preprotein conducting channel. Has a central role in coupling the hydrolysis of ATP to the transfer of proteins into and across the cell membrane, serving both as a receptor for the preprotein-SecB complex and as an ATP-driven molecular motor driving the stepwise translocation of polypeptide chains across the membrane. This chain is Protein translocase subunit SecA, found in Neisseria meningitidis serogroup C / serotype 2a (strain ATCC 700532 / DSM 15464 / FAM18).